Consider the following 467-residue polypeptide: Asparagine--tRNA ligase (467 aa).

Belongs to the class-II aminoacyl-tRNA synthetase family. As to quaternary structure, homodimer.

Its subcellular location is the cytoplasm. It carries out the reaction tRNA(Asn) + L-asparagine + ATP = L-asparaginyl-tRNA(Asn) + AMP + diphosphate + H(+). In Actinobacillus pleuropneumoniae serotype 5b (strain L20), this protein is Asparagine--tRNA ligase.